Consider the following 423-residue polypeptide: Serine hydroxymethyltransferase (423 aa).

(6S)-5,6,7,8-tetrahydrofolate-binding positions include Leu-121 and 125-127 (GHL). Lys-230 bears the N6-(pyridoxal phosphate)lysine mark. Residue 355–357 (SPF) participates in (6S)-5,6,7,8-tetrahydrofolate binding.

It belongs to the SHMT family. Homodimer. The cofactor is pyridoxal 5'-phosphate.

It localises to the cytoplasm. The catalysed reaction is (6R)-5,10-methylene-5,6,7,8-tetrahydrofolate + glycine + H2O = (6S)-5,6,7,8-tetrahydrofolate + L-serine. It functions in the pathway one-carbon metabolism; tetrahydrofolate interconversion. Its pathway is amino-acid biosynthesis; glycine biosynthesis; glycine from L-serine: step 1/1. In terms of biological role, catalyzes the reversible interconversion of serine and glycine with tetrahydrofolate (THF) serving as the one-carbon carrier. This reaction serves as the major source of one-carbon groups required for the biosynthesis of purines, thymidylate, methionine, and other important biomolecules. Also exhibits THF-independent aldolase activity toward beta-hydroxyamino acids, producing glycine and aldehydes, via a retro-aldol mechanism. This is Serine hydroxymethyltransferase from Hydrogenovibrio crunogenus (strain DSM 25203 / XCL-2) (Thiomicrospira crunogena).